A 409-amino-acid polypeptide reads, in one-letter code: Microfibrillar-associated protein 3-like (409 aa).

Residues 1-28 (MGLQKSHLTVCLPPSVPFLILVSTLATA) form the signal peptide. The Extracellular portion of the chain corresponds to 29-148 (KSVTNSTLNG…TLRVIFTSGD (120 aa)). N-linked (GlcNAc...) asparagine glycosylation is found at N33, N37, N67, N111, and N135. In terms of domain architecture, Ig-like C2-type spans 47 to 141 (PVIIARTDHI…GTINNTVTLR (95 aa)). Residues C68 and C125 are joined by a disulfide bond. Residues 149–169 (MGVYYMVVCLVAFTIVMILNI) traverse the membrane as a helical segment. At 170–409 (TRLCMMSSHL…NTCIIYESHV (240 aa)) the chain is on the cytoplasmic side. At Y287 the chain carries Phosphotyrosine. Residues S298, S303, S306, and S307 each carry the phosphoserine modification. Positions 319–395 (VSVHPQSKRD…AHLETTEPAV (77 aa)) are disordered. Positions 325–340 (SKRDHVDDQEGGHFEV) are enriched in basic and acidic residues. The segment covering 356–373 (TAEPSTDITTTELTSEET) has biased composition (low complexity).

Its subcellular location is the cell membrane. It is found in the nucleus. The protein resides in the cytoplasm. Functionally, may participate in the nuclear signaling of EGFR and MAPK1/ERK2. The polypeptide is Microfibrillar-associated protein 3-like (Mfap3l) (Mus musculus (Mouse)).